A 1067-amino-acid polypeptide reads, in one-letter code: Sal-like protein 4 (1067 aa).

Residues 1-62 (MSRRKQAKPQ…SEDSIPVKRP (62 aa)) form a disordered region. The span at 15–42 (EEGQGEQPQQLPSPDLAEALAAEEPGAP) shows a compositional bias: low complexity. At serine 53 the chain carries Phosphoserine. The C2H2-type 1; atypical zinc finger occupies 68-90 (HICNKCCAEFFSLSEFMEHKKSC). The tract at residues 115 to 140 (ALSHQLGSPSNKDSLQENGSSSGDLK) is disordered. Over residues 119 to 137 (QLGSPSNKDSLQENGSSSG) the composition is skewed to polar residues. Residue lysine 151 forms a Glycyl lysine isopeptide (Lys-Gly) (interchain with G-Cter in SUMO1); alternate linkage. Residue lysine 151 forms a Glycyl lysine isopeptide (Lys-Gly) (interchain with G-Cter in SUMO2); alternate linkage. Residues lysine 170, lysine 185, and lysine 291 each participate in a glycyl lysine isopeptide (Lys-Gly) (interchain with G-Cter in SUMO2) cross-link. Phosphoserine is present on serine 308. A Glycyl lysine isopeptide (Lys-Gly) (interchain with G-Cter in SUMO1); alternate cross-link involves residue lysine 317. Lysine 317 is covalently cross-linked (Glycyl lysine isopeptide (Lys-Gly) (interchain with G-Cter in SUMO2); alternate). A Glycyl lysine isopeptide (Lys-Gly) (interchain with G-Cter in SUMO2) cross-link involves residue lysine 377. Lysine 379 is covalently cross-linked (Glycyl lysine isopeptide (Lys-Gly) (interchain with G-Cter in SUMO1); alternate). Lysine 379 participates in a covalent cross-link: Glycyl lysine isopeptide (Lys-Gly) (interchain with G-Cter in SUMO2); alternate. C2H2-type zinc fingers lie at residues 387-409 (HKCR…LRSH) and 415-437 (YVCP…LQRH). Lysine 441 participates in a covalent cross-link: Glycyl lysine isopeptide (Lys-Gly) (interchain with G-Cter in SUMO2). The tract at residues 471–521 (DESSLSVDAEPVPVTGTPSLGLPQKLTSGPNSRDLMGGSLPNDMQPGPSPE) is disordered. Lysine 557 is covalently cross-linked (Glycyl lysine isopeptide (Lys-Gly) (interchain with G-Cter in SUMO2)). 2 consecutive C2H2-type zinc fingers follow at residues 573–595 (NECL…YRTH) and 601–623 (FQCK…LGVH). Residues lysine 604 and lysine 630 each participate in a glycyl lysine isopeptide (Lys-Gly) (interchain with G-Cter in SUMO2) cross-link. Residues 633-655 (HSCPICQKKFTNAVMLQQHIRMH) form a C2H2-type 6 zinc finger. 2 disordered regions span residues 682–716 (ENGS…STVS) and 752–835 (RQSS…SLPP). Residues 693–704 (DAAEGMEAEEVC) are compositionally biased toward acidic residues. Composition is skewed to polar residues over residues 707–716 (DVPSGPSTVS) and 752–761 (RQSSRENSSL). Phosphoserine is present on residues serine 785 and serine 798. A compositionally biased stretch (polar residues) spans 798 to 809 (SPANSQAGSVKS). Residues 810–829 (RSPEGHKAEGVESCRVDTEG) show a composition bias toward basic and acidic residues. A Glycyl lysine isopeptide (Lys-Gly) (interchain with G-Cter in SUMO1); alternate cross-link involves residue lysine 846. Lysine 846 participates in a covalent cross-link: Glycyl lysine isopeptide (Lys-Gly) (interchain with G-Cter in SUMO2); alternate. Residues 880–902 (HCCTRCGKNFSSASALQIHERTH) form a C2H2-type 7 zinc finger. A Glycyl lysine isopeptide (Lys-Gly) (interchain with G-Cter in SUMO2) cross-link involves residue lysine 906. Residues 908 to 930 (FVCNICGRAFTTKGNLKVHYMTH) form a C2H2-type 8 zinc finger. Residues lysine 942 and lysine 957 each participate in a glycyl lysine isopeptide (Lys-Gly) (interchain with G-Cter in SUMO2) cross-link. Serine 1029 carries the post-translational modification Phosphoserine.

Belongs to the sal C2H2-type zinc-finger protein family. In terms of assembly, interacts with POU5F1/OCT4. Interacts with NANOG. Interacts with BEND3. Interacts with NSD2 (via PHD-type zinc fingers 1, 2 and 3). Interacts with NRBP1. In terms of processing, sumoylation with both SUMO1 and SUMO2 regulates the stability, subcellular localization, transcriptional activity, and may reduce interaction with POU5F1/OCT4.

The protein localises to the cytoplasm. It localises to the nucleus. Functionally, transcription factor with a key role in the maintenance and self-renewal of embryonic and hematopoietic stem cells. This Mus musculus (Mouse) protein is Sal-like protein 4 (Sall4).